A 613-amino-acid chain; its full sequence is Oxidoreductase GME11365 (613 aa).

3 Plastocyanin-like domains span residues 72-188 (ISEA…HGPS), 198-331 (PLLI…WIHG), and 431-571 (VDWR…EQPS).

Belongs to the multicopper oxidase family.

Its pathway is secondary metabolite biosynthesis. In terms of biological role, oxidoreductase; part of the gene cluster that mediates the biosynthesis of dibenzodioxocinones such as pestalotiollide B, a novel class of inhibitors against cholesterol ester transfer protein (CEPT). The biosynthesis initiates from condensation of acetate and malonate units catalyzed by the non-reducing PKS pks8/GME11356. Pks8/GME11356 lacks a thioesterase (TE) domain, which is important to the cyclizing of the third ring of atrochrysone carboxylic acid, and the esterase GME11355 might play the role of TE and catalyzes the cyclization reaction of the C ring. The lactamase-like protein GME11357 (or other beta-lactamases in Pestalotiopsis microspora) probably hydrolyzes the thioester bond between the ACP of pks8/GME11356 and the intermediate to release atrochrysone carboxylic acid, which is spontaneously dehydrates to form endocrocin anthrone. Endocrocin anthrone is further converted to emodin via the endocrocin intermediate. Emodin is then oxidized by several enzymes such as the Baeyer-Villiger oxidase GME11358, the oxidoreductase GME11367, the short chain dehydrogenase/reductase GME11373, as well as by other oxidoreductases from the cluster, to modify the A and C rings and open the B ring, and finally yield monodictyphenone. The prenyltransferase GME11375 may catalyze the addition reaction between the C5 side chains and the carbon bone of dibenzodioxocinones. The remaining biochemical reactions to the final product dibenzodioxocinones should be methylation catalyzed by methyltransferase GME11366 and reduction and lactonization reaction catalyzed by a series of oxidordeuctases. In Pestalotiopsis microspora, this protein is Oxidoreductase GME11365.